The sequence spans 133 residues: ATP synthase epsilon chain, chloroplastic (133 aa).

This sequence belongs to the ATPase epsilon chain family. F-type ATPases have 2 components, CF(1) - the catalytic core - and CF(0) - the membrane proton channel. CF(1) has five subunits: alpha(3), beta(3), gamma(1), delta(1), epsilon(1). CF(0) has three main subunits: a, b and c.

The protein localises to the plastid. The protein resides in the chloroplast thylakoid membrane. Its function is as follows. Produces ATP from ADP in the presence of a proton gradient across the membrane. In Vitis vinifera (Grape), this protein is ATP synthase epsilon chain, chloroplastic.